The chain runs to 692 residues: DNA ligase (692 aa).

NAD(+) contacts are provided by residues 35–39, 88–89, and Glu117; these read DLVYD and SL. Lys119 serves as the catalytic N6-AMP-lysine intermediate. Positions 140, 176, 301, and 325 each coordinate NAD(+). Residues Cys416, Cys419, Cys434, and Cys439 each contribute to the Zn(2+) site. The BRCT domain maps to 611-692; it reads LTNQSNSWAS…FDLIKNSKKT (82 aa).

This sequence belongs to the NAD-dependent DNA ligase family. LigA subfamily. Mg(2+) serves as cofactor. It depends on Mn(2+) as a cofactor.

The enzyme catalyses NAD(+) + (deoxyribonucleotide)n-3'-hydroxyl + 5'-phospho-(deoxyribonucleotide)m = (deoxyribonucleotide)n+m + AMP + beta-nicotinamide D-nucleotide.. DNA ligase that catalyzes the formation of phosphodiester linkages between 5'-phosphoryl and 3'-hydroxyl groups in double-stranded DNA using NAD as a coenzyme and as the energy source for the reaction. It is essential for DNA replication and repair of damaged DNA. This chain is DNA ligase, found in Mesomycoplasma hyopneumoniae (strain 232) (Mycoplasma hyopneumoniae).